We begin with the raw amino-acid sequence, 421 residues long: Histidine--tRNA ligase (421 aa).

It belongs to the class-II aminoacyl-tRNA synthetase family. In terms of assembly, homodimer.

Its subcellular location is the cytoplasm. The catalysed reaction is tRNA(His) + L-histidine + ATP = L-histidyl-tRNA(His) + AMP + diphosphate + H(+). In Solidesulfovibrio magneticus (strain ATCC 700980 / DSM 13731 / RS-1) (Desulfovibrio magneticus), this protein is Histidine--tRNA ligase.